A 397-amino-acid polypeptide reads, in one-letter code: Riboflavin biosynthesis protein RibBA (397 aa).

Residues 1-199 form a DHBP synthase region; sequence MFHRIEEALE…IEDLIAYRRH (199 aa). D-ribulose 5-phosphate contacts are provided by residues 26–27, D31, 138–142, and E162; these read RE and RAGHT. Residue E27 coordinates Mg(2+). H141 contacts Mg(2+). Residues 200 to 397 form a GTP cyclohydrolase II region; that stretch reads HETFVTKEVE…VTKLGHLLNL (198 aa). 250–254 provides a ligand contact to GTP; it reads RVHSE. Zn(2+)-binding residues include C255, C266, and C268. Residues Q271, 293-295, and T315 contribute to the GTP site; that span reads EGR. D327 acts as the Proton acceptor; for GTP cyclohydrolase activity in catalysis. R329 serves as the catalytic Nucleophile; for GTP cyclohydrolase activity. T350 and K355 together coordinate GTP.

In the N-terminal section; belongs to the DHBP synthase family. It in the C-terminal section; belongs to the GTP cyclohydrolase II family. The cofactor is Mg(2+). Mn(2+) serves as cofactor. Zn(2+) is required as a cofactor.

The enzyme catalyses D-ribulose 5-phosphate = (2S)-2-hydroxy-3-oxobutyl phosphate + formate + H(+). It carries out the reaction GTP + 4 H2O = 2,5-diamino-6-hydroxy-4-(5-phosphoribosylamino)-pyrimidine + formate + 2 phosphate + 3 H(+). Its pathway is cofactor biosynthesis; riboflavin biosynthesis; 2-hydroxy-3-oxobutyl phosphate from D-ribulose 5-phosphate: step 1/1. It functions in the pathway cofactor biosynthesis; riboflavin biosynthesis; 5-amino-6-(D-ribitylamino)uracil from GTP: step 1/4. Catalyzes the conversion of D-ribulose 5-phosphate to formate and 3,4-dihydroxy-2-butanone 4-phosphate. Its function is as follows. Catalyzes the conversion of GTP to 2,5-diamino-6-ribosylamino-4(3H)-pyrimidinone 5'-phosphate (DARP), formate and pyrophosphate. The polypeptide is Riboflavin biosynthesis protein RibBA (Bacillus cytotoxicus (strain DSM 22905 / CIP 110041 / 391-98 / NVH 391-98)).